We begin with the raw amino-acid sequence, 231 residues long: NADH-ubiquinone oxidoreductase chain 4 (231 aa).

Helical transmembrane passes span 1 to 21, 34 to 54, 63 to 85, 89 to 111, 128 to 148, 156 to 176, and 211 to 231; these read PIAG…YGII, LFLP…LTCL, IAYS…TPWG, AMAL…NTTY, ILPM…AIPP, LLIM…LGLS, and LLIA…ELVI.

The protein belongs to the complex I subunit 4 family.

The protein localises to the mitochondrion membrane. The catalysed reaction is a ubiquinone + NADH + 5 H(+)(in) = a ubiquinol + NAD(+) + 4 H(+)(out). Core subunit of the mitochondrial membrane respiratory chain NADH dehydrogenase (Complex I) that is believed to belong to the minimal assembly required for catalysis. Complex I functions in the transfer of electrons from NADH to the respiratory chain. The immediate electron acceptor for the enzyme is believed to be ubiquinone. This Crotalus adamanteus (Eastern diamondback rattlesnake) protein is NADH-ubiquinone oxidoreductase chain 4 (MT-ND4).